The primary structure comprises 408 residues: CCA-adding enzyme (408 aa).

Residues G8 and R11 each coordinate ATP. Positions 8 and 11 each coordinate CTP. Positions 21 and 23 each coordinate Mg(2+). The ATP site is built by R91, R137, and R140. 3 residues coordinate CTP: R91, R137, and R140. The HD domain maps to 226–329 (TGYYTMTTLS…MTLFHVFDCW (104 aa)).

Belongs to the tRNA nucleotidyltransferase/poly(A) polymerase family. Bacterial CCA-adding enzyme type 2 subfamily. The cofactor is Mg(2+).

The catalysed reaction is a tRNA precursor + 2 CTP + ATP = a tRNA with a 3' CCA end + 3 diphosphate. The enzyme catalyses a tRNA with a 3' CCA end + 2 CTP + ATP = a tRNA with a 3' CCACCA end + 3 diphosphate. In terms of biological role, catalyzes the addition and repair of the essential 3'-terminal CCA sequence in tRNAs without using a nucleic acid template. Adds these three nucleotides in the order of C, C, and A to the tRNA nucleotide-73, using CTP and ATP as substrates and producing inorganic pyrophosphate. tRNA 3'-terminal CCA addition is required both for tRNA processing and repair. Also involved in tRNA surveillance by mediating tandem CCA addition to generate a CCACCA at the 3' terminus of unstable tRNAs. While stable tRNAs receive only 3'-terminal CCA, unstable tRNAs are marked with CCACCA and rapidly degraded. The sequence is that of CCA-adding enzyme from Blochmanniella pennsylvanica (strain BPEN).